A 196-amino-acid polypeptide reads, in one-letter code: Probable malonic semialdehyde reductase RutE (196 aa).

This sequence belongs to the nitroreductase family. HadB/RutE subfamily. FMN is required as a cofactor.

The enzyme catalyses 3-hydroxypropanoate + NADP(+) = 3-oxopropanoate + NADPH + H(+). Functionally, may reduce toxic product malonic semialdehyde to 3-hydroxypropionic acid, which is excreted. This is Probable malonic semialdehyde reductase RutE from Escherichia coli (strain SMS-3-5 / SECEC).